Here is a 518-residue protein sequence, read N- to C-terminus: MLNPLQVLQELNESSSFLQPLAFTLLAIFLVLLYTWYSSTKTTTQKSTQPPSPPKLPIIGNLHQIGSYPHRSLQALSQRHGPLMLLHFGSVPVLVVSSAEAAREILKTHDLTFSDRPKSTIFEKLLYNYKDVASAPYGEYWRQVRSICVLNLLSNRRVRSFRSVREEETKSMIRNIKGSSSSVLNLSEMFVRLTNDVVCKVALGRKYSDGEGGESGRMFKEILGEFGDLLGTVNIGDYVPWLSWLSHVNGLGAKLDKVAKQLDDFIDTVVQEHMNHSSRSGDDDQKDFLDILLAIQKETSAGIPIDGVSVKGIILDMFAAGTDTTYSALEWAMTELLRHPRVMNKLQNEVRGIVGNRTDVITEDDLVEMHYLKAVTKETLRLHPPIPLLVPRMSTRDVEVNGYNIKANTQVFISAWQIGRDPKLYDKPEEFEPERFLNNGIDYKGNDFELIPFGAGRRVCPGIQFAMAVNEIALANIVHKFDWALPDEASGEDLDMTETTGLTAHKKYPLKAVAFPHF.

N-linked (GlcNAc...) asparagine glycosylation is present at asparagine 12. Residues 17–37 form a helical membrane-spanning segment; the sequence is FLQPLAFTLLAIFLVLLYTWY. N-linked (GlcNAc...) asparagine glycosylation is found at asparagine 185, asparagine 275, and asparagine 356. Cysteine 460 contributes to the heme binding site.

Belongs to the cytochrome P450 family. Heme is required as a cofactor. Expressed at similar levels in fruit kernel, seedlings, leaves, stems and buds.

It is found in the membrane. This chain is Cytochrome P450 736A117, found in Prunus mume (Japanese apricot).